Consider the following 422-residue polypeptide: 5-methylthioadenosine/S-adenosylhomocysteine deaminase 1 (422 aa).

Residues H56 and H58 each contribute to the Zn(2+) site. E85 and H174 together coordinate substrate. Residue H201 participates in Zn(2+) binding. Substrate-binding residues include E204 and D290. A Zn(2+)-binding site is contributed by D290.

The protein belongs to the metallo-dependent hydrolases superfamily. MTA/SAH deaminase family. Zn(2+) is required as a cofactor.

The enzyme catalyses S-adenosyl-L-homocysteine + H2O + H(+) = S-inosyl-L-homocysteine + NH4(+). It catalyses the reaction S-methyl-5'-thioadenosine + H2O + H(+) = S-methyl-5'-thioinosine + NH4(+). Its function is as follows. Catalyzes the deamination of 5-methylthioadenosine and S-adenosyl-L-homocysteine into 5-methylthioinosine and S-inosyl-L-homocysteine, respectively. Is also able to deaminate adenosine. This chain is 5-methylthioadenosine/S-adenosylhomocysteine deaminase 1, found in Archaeoglobus fulgidus (strain ATCC 49558 / DSM 4304 / JCM 9628 / NBRC 100126 / VC-16).